We begin with the raw amino-acid sequence, 152 residues long: Transcriptional regulator MraZ (152 aa).

SpoVT-AbrB domains are found at residues 5–52 (ATQI…TLSE) and 81–124 (ASEC…DEQA).

The protein belongs to the MraZ family. Forms oligomers.

It localises to the cytoplasm. Its subcellular location is the nucleoid. Functionally, negatively regulates its own expression and that of the subsequent genes in the proximal part of the division and cell wall (dcw) gene cluster. Acts by binding directly to DNA. May also regulate the expression of genes outside the dcw cluster. In Photorhabdus laumondii subsp. laumondii (strain DSM 15139 / CIP 105565 / TT01) (Photorhabdus luminescens subsp. laumondii), this protein is Transcriptional regulator MraZ.